Here is a 565-residue protein sequence, read N- to C-terminus: Probable transcription factor lepB (565 aa).

Positions 52-259 are fungal specific transcription factor domain; sequence KRYAEDVTYL…PRNLDDRDLD (208 aa).

Its subcellular location is the nucleus. Its function is as follows. Probable transcription factor; part of the gene cluster 23 that mediates the biosynthesis of a family of 2-pyridones known as leporins. This is Probable transcription factor lepB from Aspergillus flavus (strain ATCC 200026 / FGSC A1120 / IAM 13836 / NRRL 3357 / JCM 12722 / SRRC 167).